The chain runs to 419 residues: L-rhamnose isomerase (419 aa).

Positions 262, 294, and 296 each coordinate Mn(2+).

This sequence belongs to the rhamnose isomerase family. Homotetramer. It depends on Mn(2+) as a cofactor.

It is found in the cytoplasm. The catalysed reaction is L-rhamnopyranose = L-rhamnulose. The protein operates within carbohydrate degradation; L-rhamnose degradation; glycerone phosphate from L-rhamnose: step 1/3. Functionally, catalyzes the interconversion of L-rhamnose and L-rhamnulose. The chain is L-rhamnose isomerase from Salmonella typhi.